We begin with the raw amino-acid sequence, 312 residues long: Ornithine carbamoyltransferase (312 aa).

Carbamoyl phosphate is bound by residues 50 to 53 (STRT), Gln77, Arg101, and 128 to 131 (HPCQ). L-ornithine-binding positions include Asn160, Asp224, and 228–229 (SM). Residues 264–265 (CL) and Arg292 contribute to the carbamoyl phosphate site.

It belongs to the aspartate/ornithine carbamoyltransferase superfamily. OTCase family.

It localises to the cytoplasm. The enzyme catalyses carbamoyl phosphate + L-ornithine = L-citrulline + phosphate + H(+). Its pathway is amino-acid biosynthesis; L-arginine biosynthesis; L-arginine from L-ornithine and carbamoyl phosphate: step 1/3. In terms of biological role, reversibly catalyzes the transfer of the carbamoyl group from carbamoyl phosphate (CP) to the N(epsilon) atom of ornithine (ORN) to produce L-citrulline. The protein is Ornithine carbamoyltransferase of Leifsonia xyli subsp. xyli (strain CTCB07).